Consider the following 417-residue polypeptide: MYSKEMRIASYDEELETALTNEARRQEEHIELIASENYVSPRVLEAQGSVLTNKYAEGYPGKRYYGGCEYVDVAERLAIERAKILFEADYANVQPHSGSQANAAACLALLAPGDTLMGLSLAHGGHLTHGAKVNFSGQIFNAVQFGVNADTGLIDYDEVEQLAKAHRPKLIIAGFTAYSRIVDWQRFRAIADGVGAYLLADIAHLAGMIAAGIYPNPVQIADVTTSTTHKTLRGPRSGLILAKANPEIEKKLNSKVFPGIQGGPLMHVVAAKAVAFKEAMEPAFKDYQRQVIRNAQAMAEAIQSRGYKIVSGGTDSHLFLVDLVAKGLTGKAADAALGRANITVNKNTVPNDPQSPFVTSGIRIGSPAMTTRGFKEAEICELAGWVCDVLDDIENETVIADTKEKVLALCARFPVYG.

(6S)-5,6,7,8-tetrahydrofolate-binding positions include L121 and 125-127; that span reads GHL. K230 carries the N6-(pyridoxal phosphate)lysine modification. Residue 355–357 participates in (6S)-5,6,7,8-tetrahydrofolate binding; the sequence is SPF.

The protein belongs to the SHMT family. Homodimer. It depends on pyridoxal 5'-phosphate as a cofactor.

It is found in the cytoplasm. The catalysed reaction is (6R)-5,10-methylene-5,6,7,8-tetrahydrofolate + glycine + H2O = (6S)-5,6,7,8-tetrahydrofolate + L-serine. Its pathway is one-carbon metabolism; tetrahydrofolate interconversion. The protein operates within amino-acid biosynthesis; glycine biosynthesis; glycine from L-serine: step 1/1. Its function is as follows. Catalyzes the reversible interconversion of serine and glycine with tetrahydrofolate (THF) serving as the one-carbon carrier. This reaction serves as the major source of one-carbon groups required for the biosynthesis of purines, thymidylate, methionine, and other important biomolecules. Also exhibits THF-independent aldolase activity toward beta-hydroxyamino acids, producing glycine and aldehydes, via a retro-aldol mechanism. This Nitrosococcus oceani (strain ATCC 19707 / BCRC 17464 / JCM 30415 / NCIMB 11848 / C-107) protein is Serine hydroxymethyltransferase.